We begin with the raw amino-acid sequence, 396 residues long: UPF0164 protein TP_0858 (396 aa).

Residues 1-28 (MGTMIRHTFTHRCGALLCALALGSSTMA) form the signal peptide.

The protein belongs to the UPF0164 family.

The sequence is that of UPF0164 protein TP_0858 from Treponema pallidum (strain Nichols).